A 150-amino-acid chain; its full sequence is Large ribosomal subunit protein bL9 (150 aa).

This sequence belongs to the bacterial ribosomal protein bL9 family.

In terms of biological role, binds to the 23S rRNA. The chain is Large ribosomal subunit protein bL9 from Buchnera aphidicola subsp. Acyrthosiphon pisum (strain 5A).